Reading from the N-terminus, the 155-residue chain is Anaerobic ribonucleoside-triphosphate reductase-activating protein (155 aa).

[4Fe-4S] cluster contacts are provided by C26, C30, and C33. Residues 32–34 and G74 contribute to the S-adenosyl-L-methionine site; that span reads GCY.

Belongs to the organic radical-activating enzymes family. Forms a tetramer composed of two NrdD and two NrdG subunits. Requires [4Fe-4S] cluster as cofactor.

It localises to the cytoplasm. The enzyme catalyses glycyl-[protein] + reduced [flavodoxin] + S-adenosyl-L-methionine = glycin-2-yl radical-[protein] + semiquinone [flavodoxin] + 5'-deoxyadenosine + L-methionine + H(+). In terms of biological role, activation of anaerobic ribonucleoside-triphosphate reductase under anaerobic conditions by generation of an organic free radical, using S-adenosylmethionine and reduced flavodoxin as cosubstrates to produce 5'-deoxy-adenosine. This chain is Anaerobic ribonucleoside-triphosphate reductase-activating protein (nrdG), found in Haemophilus influenzae (strain ATCC 51907 / DSM 11121 / KW20 / Rd).